A 355-amino-acid polypeptide reads, in one-letter code: Protein RecA (355 aa).

An ATP-binding site is contributed by 65 to 72 (GPESSGKT).

Belongs to the RecA family.

It is found in the cytoplasm. In terms of biological role, can catalyze the hydrolysis of ATP in the presence of single-stranded DNA, the ATP-dependent uptake of single-stranded DNA by duplex DNA, and the ATP-dependent hybridization of homologous single-stranded DNAs. It interacts with LexA causing its activation and leading to its autocatalytic cleavage. This is Protein RecA from Pseudomonas entomophila (strain L48).